We begin with the raw amino-acid sequence, 199 residues long: Chaperone protein TorD (199 aa).

It belongs to the TorD/DmsD family. TorD subfamily.

The protein resides in the cytoplasm. Functionally, involved in the biogenesis of TorA. Acts on TorA before the insertion of the molybdenum cofactor and, as a result, probably favors a conformation of the apoenzyme that is competent for acquiring the cofactor. In Shigella boydii serotype 18 (strain CDC 3083-94 / BS512), this protein is Chaperone protein TorD.